Consider the following 210-residue polypeptide: Ribosomal RNA small subunit methyltransferase G (210 aa).

Residues glycine 76, methionine 81, 127-128 (VE), and arginine 145 each bind S-adenosyl-L-methionine.

It belongs to the methyltransferase superfamily. RNA methyltransferase RsmG family.

The protein resides in the cytoplasm. The catalysed reaction is guanosine(527) in 16S rRNA + S-adenosyl-L-methionine = N(7)-methylguanosine(527) in 16S rRNA + S-adenosyl-L-homocysteine. In terms of biological role, specifically methylates the N7 position of guanine in position 527 of 16S rRNA. The polypeptide is Ribosomal RNA small subunit methyltransferase G (Acinetobacter baumannii (strain SDF)).